A 578-amino-acid chain; its full sequence is Arginine--tRNA ligase (578 aa).

Residues 127–137 carry the 'HIGH' region motif; it reads PNLAKEMHVGH.

It belongs to the class-I aminoacyl-tRNA synthetase family. In terms of assembly, monomer.

The protein localises to the cytoplasm. It carries out the reaction tRNA(Arg) + L-arginine + ATP = L-arginyl-tRNA(Arg) + AMP + diphosphate. This is Arginine--tRNA ligase from Pseudomonas putida (strain GB-1).